The following is a 119-amino-acid chain: Large ribosomal subunit protein uL18 (119 aa).

This sequence belongs to the universal ribosomal protein uL18 family. In terms of assembly, part of the 50S ribosomal subunit; part of the 5S rRNA/L5/L18/L25 subcomplex. Contacts the 5S and 23S rRNAs.

Functionally, this is one of the proteins that bind and probably mediate the attachment of the 5S RNA into the large ribosomal subunit, where it forms part of the central protuberance. In Borrelia recurrentis (strain A1), this protein is Large ribosomal subunit protein uL18.